Reading from the N-terminus, the 435-residue chain is Xylose isomerase (435 aa).

Residues His99 and Asp102 contribute to the active site. Residues Glu230, Glu266, His269, Asp294, Asp305, Asp307, and Asp337 each coordinate Mg(2+).

It belongs to the xylose isomerase family. In terms of assembly, homotetramer. The cofactor is Mg(2+).

The protein localises to the cytoplasm. It catalyses the reaction alpha-D-xylose = alpha-D-xylulofuranose. The chain is Xylose isomerase (xylA) from Tetragenococcus halophilus (Pediococcus halophilus).